Reading from the N-terminus, the 356-residue chain is Thrombopoietin (356 aa).

An N-terminal signal peptide occupies residues Met1–Ser21. Cystine bridges form between Cys28-Cys172 and Cys50-Cys106. Asn197, Asn206, Asn235, Asn249, Asn256, Asn336, and Asn351 each carry an N-linked (GlcNAc...) asparagine glycan. The tract at residues Gly291–Thr356 is disordered. A compositionally biased stretch (polar residues) spans Pro330–Ala339.

Belongs to the EPO/TPO family. In terms of tissue distribution, found mainly in the liver, kidney and skeletal muscle.

It is found in the secreted. Its function is as follows. Lineage-specific cytokine affecting the proliferation and maturation of megakaryocytes from their committed progenitor cells. It acts at a late stage of megakaryocyte development. It may be the major physiological regulator of circulating platelets. The chain is Thrombopoietin (Thpo) from Mus musculus (Mouse).